The primary structure comprises 377 residues: Opsin-5 (377 aa).

Residues 1-33 are Extracellular-facing; that stretch reads MALNHTALPQDERLPHYLRDEDPFASKLSWEAD. The N-linked (GlcNAc...) asparagine glycan is linked to N4. The helical transmembrane segment at 34 to 54 threads the bilayer; sequence LVAGFYLTIIGILSTFGNGYV. Over 55–74 the chain is Cytoplasmic; the sequence is LYMSSRRKKKLRPAEIMTIN. The helical transmembrane segment at 75–95 threads the bilayer; that stretch reads LAVCDLGISVVGKPFTIISCF. The Extracellular portion of the chain corresponds to 96–108; it reads CHRWVFGWFGCRW. C106 and C183 are oxidised to a cystine. A helical membrane pass occupies residues 109–129; that stretch reads YGWAGFFFGCGSLITMTAVSL. Residues 130 to 150 are Cytoplasmic-facing; that stretch reads DRYLKICYLSYGVWLKRKHAY. Residues 151–171 form a helical membrane-spanning segment; sequence ICLAVIWAYASFWTTMPLVGL. Residues 172-197 are Extracellular-facing; it reads GDYAPEPFGTSCTLDWWLAQASGGGQ. The helical transmembrane segment at 198-218 threads the bilayer; that stretch reads VFILSILFFCLLLPTAVIVFS. At 219–252 the chain is on the cytoplasmic side; the sequence is YAKIIAKVKSSSKEVAHFDSRIHSSHVLEVKLTK. Residues 253–273 form a helical membrane-spanning segment; that stretch reads VAMLICAGFLIAWIPYAVVSV. Residues 274–288 lie on the Extracellular side of the membrane; sequence WSAFGRPDSIPIQLS. The chain crosses the membrane as a helical span at residues 289 to 309; it reads VVPTLLAKSAAMYNPIIYQVI. Residue K296 is modified to N6-(retinylidene)lysine. Residues 310–377 are Cytoplasmic-facing; that stretch reads DYRFACCQAG…HSNDGDCGKK (68 aa). 2 S-palmitoyl cysteine lipidation sites follow: C315 and C316. Residues 357-377 are disordered; sequence FTSAHVMDGESHSNDGDCGKK. The segment covering 363–377 has biased composition (basic and acidic residues); sequence MDGESHSNDGDCGKK.

The protein belongs to the G-protein coupled receptor 1 family. Opsin subfamily. It is uncertain whether Cys-315 or Cys-316 is palmitoylated. Expressed in the brain (at protein level). Weakly expressed in the skin and liver (at protein level). Abundantly expressed in striated muscle cells. Expressed in Math7/Atok7-dependent retinal ganglion cells in the ganglion cell layer (at protein level). Additionally expressed in horizontal and amacrine cells in the inner nuclear layer of the retina (at protein level). Expressed around the base of hair follicles and in epidermal and sebaceous gland cells of the outer ear (at protein level). Abundantly expressed in vibrissae hair follicles and weakly expressed in the vibrissae skin pad, dorsal back skin, and tail.

The protein localises to the cell membrane. G-protein coupled receptor which selectively activates G(i) type G proteins via ultraviolet A (UVA) light-mediated activation in the retina. Preferentially binds the chromophore 11-cis retinal and is a bistable protein that displays emission peaks at 380 nm (UVA light) and 470 nm (blue light). Required for the light-response in the inner plexiform layer, and contributes to the regulation of the light-response in the nerve fiber layer, via phosphorylated DAT/SLC6A3 dopamine uptake. Involved in local corneal and retinal circadian rhythm photoentrainment via modulation of the UVA light-induced phase-shift of the retina clock. Acts as a circadian photoreceptor in the outer ear and vibrissal pads, via modulation of circadian clock-gene expression in response to violet light during the light-to-dark transition phase and night phase of the circadian cycle. Required in the retina to negatively regulate hyaloid vessel regression during postnatal development via light-dependent OPN5-SLC32A1-DRD2-VEGFR2 signaling. Involved in the light-dependent regulation of retina and vitreous compartment dopamine levels. This Mus musculus (Mouse) protein is Opsin-5 (Opn5).